A 361-amino-acid chain; its full sequence is Chorismate synthase (361 aa).

Residues 37 to 59 form a disordered region; the sequence is TEADLQHDLDRRRPGTSRYTTQR. Basic and acidic residues predominate over residues 40–49; that stretch reads DLQHDLDRRR. Residues Arg-48 and Arg-54 each coordinate NADP(+). FMN-binding positions include 125-127, 238-239, Gly-278, 293-297, and Arg-319; these read RSS, NA, and KPTSS.

The protein belongs to the chorismate synthase family. In terms of assembly, homotetramer. FMNH2 serves as cofactor.

The enzyme catalyses 5-O-(1-carboxyvinyl)-3-phosphoshikimate = chorismate + phosphate. The protein operates within metabolic intermediate biosynthesis; chorismate biosynthesis; chorismate from D-erythrose 4-phosphate and phosphoenolpyruvate: step 7/7. Catalyzes the anti-1,4-elimination of the C-3 phosphate and the C-6 proR hydrogen from 5-enolpyruvylshikimate-3-phosphate (EPSP) to yield chorismate, which is the branch point compound that serves as the starting substrate for the three terminal pathways of aromatic amino acid biosynthesis. This reaction introduces a second double bond into the aromatic ring system. The protein is Chorismate synthase of Serratia proteamaculans (strain 568).